Reading from the N-terminus, the 1396-residue chain is DNA-directed RNA polymerase subunit beta' (1396 aa).

The Zn(2+) site is built by C71, C73, C86, and C89. 3 residues coordinate Mg(2+): D462, D464, and D466. Zn(2+)-binding residues include C810, C884, C891, and C894. Residues 1372 to 1382 are compositionally biased toward basic and acidic residues; it reads DEQLAQQREDA. The disordered stretch occupies residues 1372-1396; it reads DEQLAQQREDAMEPLPAEIALSDAE.

It belongs to the RNA polymerase beta' chain family. As to quaternary structure, the RNAP catalytic core consists of 2 alpha, 1 beta, 1 beta' and 1 omega subunit. When a sigma factor is associated with the core the holoenzyme is formed, which can initiate transcription. Mg(2+) serves as cofactor. The cofactor is Zn(2+).

The catalysed reaction is RNA(n) + a ribonucleoside 5'-triphosphate = RNA(n+1) + diphosphate. Its function is as follows. DNA-dependent RNA polymerase catalyzes the transcription of DNA into RNA using the four ribonucleoside triphosphates as substrates. This Caulobacter vibrioides (strain ATCC 19089 / CIP 103742 / CB 15) (Caulobacter crescentus) protein is DNA-directed RNA polymerase subunit beta'.